The following is a 238-amino-acid chain: Tetraspanin-4 (238 aa).

At 1-13 the chain is on the cytoplasmic side; the sequence is MARACLQAVKYLM. Residues 14–34 traverse the membrane as a helical segment; it reads FAFNLLFWLGGCGVLGVGIWL. Residues 35–55 lie on the Extracellular side of the membrane; sequence AATQGSFATLSSSFPSLSAAN. The chain crosses the membrane as a helical span at residues 56-76; it reads LLIITGAFVMAIGFVGCLGAI. The Cytoplasmic segment spans residues 77-85; the sequence is KENKCLLLT. Residues 86-106 form a helical membrane-spanning segment; that stretch reads FFLLLLLVFLLEATIAILFFA. Residues 107 to 201 lie on the Extracellular side of the membrane; that stretch reads YTDKIDRYAQ…ETVKVWLQEN (95 aa). 2 N-linked (GlcNAc...) asparagine glycosylation sites follow: asparagine 152 and asparagine 161. Residues 202-222 traverse the membrane as a helical segment; it reads LLAVGIFGLCTALVQILGLTF. The Cytoplasmic segment spans residues 223 to 238; that stretch reads AMTMYCQVVKADTYCA.

It belongs to the tetraspanin (TM4SF) family. Forms a complex with integrins.

It localises to the membrane. This chain is Tetraspanin-4 (TSPAN4), found in Pongo abelii (Sumatran orangutan).